The following is a 345-amino-acid chain: UPF0324 membrane protein RB0971 (345 aa).

The next 10 helical transmembrane spans lie at 13 to 32 (SLSVVLSTYGPGLLVTAAVA), 42 to 61 (YGAPAMLMALLLGIAFHFLA), 93 to 115 (LLIGLGGGTILLLVSAIVATILF), 130 to 152 (ALLTSGAVAICGASAAMAIAAVL), 161 to 183 (NLIFTVLSVTVLSTLAMIGYPIV), 193 to 215 (ATGIFFGGTIHDVAQVVGAGFSV), 228 to 247 (LIRVTMLAPVVLIFSLVLRS), 262 to 284 (VPGFVLAFLVLAGFNSAGLVPVL), 291 to 310 (AISRWALLAGIVAVGMKTSL), and 320 to 342 (AVALVVAETLFIAVFILAGMYYL).

Belongs to the UPF0324 family.

It localises to the cell membrane. The protein is UPF0324 membrane protein RB0971 of Rhizobium meliloti (strain 1021) (Ensifer meliloti).